A 163-amino-acid chain; its full sequence is MSFDSGCPPTPPVKLLFKKHSPFAVTPQRATSGAAGYDLCSSADVVVPPKSRSLIPTDLSFQFPRGVYGRIAPRSGLAVKFFIDVGAGVIDSDYRGIVSVLLFNFSDHNFNVRRGDRIAQLILERHLTPDLEERSGLDETARGAAGFGSTGGFDTGVCPSSFS.

It belongs to the dUTPase family. Requires Mg(2+) as cofactor.

The enzyme catalyses dUTP + H2O = dUMP + diphosphate + H(+). It functions in the pathway pyrimidine metabolism; dUMP biosynthesis; dUMP from dCTP (dUTP route): step 2/2. This enzyme is involved in nucleotide metabolism: it produces dUMP, the immediate precursor of thymidine nucleotides and it decreases the intracellular concentration of dUTP so that uracil cannot be incorporated into DNA. This Galliformes (FAdV-8) protein is Deoxyuridine 5'-triphosphate nucleotidohydrolase.